The primary structure comprises 662 residues: DNA ligase (662 aa).

NAD(+)-binding positions include 34-38, 83-84, and glutamate 113; these read DYDYD and SI. The N6-AMP-lysine intermediate role is filled by lysine 115. Arginine 136, glutamate 172, lysine 286, and lysine 310 together coordinate NAD(+). Residues cysteine 404, cysteine 407, cysteine 422, and cysteine 427 each contribute to the Zn(2+) site. The region spanning 583 to 662 is the BRCT domain; it reads RESSSCLGKT…NDLLKILYPN (80 aa).

The protein belongs to the NAD-dependent DNA ligase family. LigA subfamily. The cofactor is Mg(2+). It depends on Mn(2+) as a cofactor.

The catalysed reaction is NAD(+) + (deoxyribonucleotide)n-3'-hydroxyl + 5'-phospho-(deoxyribonucleotide)m = (deoxyribonucleotide)n+m + AMP + beta-nicotinamide D-nucleotide.. Its function is as follows. DNA ligase that catalyzes the formation of phosphodiester linkages between 5'-phosphoryl and 3'-hydroxyl groups in double-stranded DNA using NAD as a coenzyme and as the energy source for the reaction. It is essential for DNA replication and repair of damaged DNA. The polypeptide is DNA ligase (Chlamydia caviae (strain ATCC VR-813 / DSM 19441 / 03DC25 / GPIC) (Chlamydophila caviae)).